Consider the following 263-residue polypeptide: Small ribosomal subunit protein eS4, Y isoform 2 (263 aa).

The S4 RNA-binding domain maps to 42–104; that stretch reads LPLIVFLRNR…TGEHFRLVYD (63 aa).

The protein belongs to the eukaryotic ribosomal protein eS4 family.

The sequence is that of Small ribosomal subunit protein eS4, Y isoform 2 (RPS4Y2) from Pan troglodytes (Chimpanzee).